The following is a 163-amino-acid chain: Cytochrome c-type biogenesis protein CcmE (163 aa).

Topologically, residues 1 to 7 (MTRKQRR) are cytoplasmic. Residues 8 to 28 (LVFIGTCGAVLAVALGLVLWA) form a helical; Signal-anchor for type II membrane protein membrane-spanning segment. Residues 29-163 (MSGTIVFFRS…RTASGEARAP (135 aa)) are Periplasmic-facing. The heme site is built by H122 and Y126. The tract at residues 134-163 (ALKKSGRWQEGAGHPAPAPPRTASGEARAP) is disordered.

The protein belongs to the CcmE/CycJ family.

The protein localises to the cell inner membrane. In terms of biological role, heme chaperone required for the biogenesis of c-type cytochromes. Transiently binds heme delivered by CcmC and transfers the heme to apo-cytochromes in a process facilitated by CcmF and CcmH. In Methylobacterium sp. (strain 4-46), this protein is Cytochrome c-type biogenesis protein CcmE.